The chain runs to 206 residues: Small ribosomal subunit protein uS4 (206 aa).

An S4 RNA-binding domain is found at 96-157 (SRLDNVVYRM…KAQKQLRVQA (62 aa)).

Belongs to the universal ribosomal protein uS4 family. As to quaternary structure, part of the 30S ribosomal subunit. Contacts protein S5. The interaction surface between S4 and S5 is involved in control of translational fidelity.

Its function is as follows. One of the primary rRNA binding proteins, it binds directly to 16S rRNA where it nucleates assembly of the body of the 30S subunit. Functionally, with S5 and S12 plays an important role in translational accuracy. In Alkalilimnicola ehrlichii (strain ATCC BAA-1101 / DSM 17681 / MLHE-1), this protein is Small ribosomal subunit protein uS4.